The following is a 250-amino-acid chain: NAD-dependent protein deacetylase (250 aa).

Residues 1–244 (MECDKVGDLL…PCVVDYIKSQ (244 aa)) enclose the Deacetylase sirtuin-type domain. Residues Ala-22, Thr-26, Phe-33, Arg-34, Gln-98, Ile-100, Asp-101, and His-116 each contribute to the NAD(+) site. A nicotinamide-binding site is contributed by Phe-33. 2 residues coordinate nicotinamide: Ile-100 and Asp-101. The Proton acceptor role is filled by His-116. 4 residues coordinate Zn(2+): Cys-124, Cys-127, Cys-149, and Cys-151. 4 residues coordinate NAD(+): Ser-187, Ser-188, Asn-212, and Val-230.

Belongs to the sirtuin family. Class U subfamily. Zn(2+) serves as cofactor.

The protein resides in the cytoplasm. It catalyses the reaction N(6)-acetyl-L-lysyl-[protein] + NAD(+) + H2O = 2''-O-acetyl-ADP-D-ribose + nicotinamide + L-lysyl-[protein]. NAD-dependent protein deacetylase which modulates the activities of several enzymes which are inactive in their acetylated form. Deacetylates the N-terminal lysine residue of Alba, the major archaeal chromatin protein and that, in turn, increases Alba's DNA binding affinity, thereby repressing transcription. The sequence is that of NAD-dependent protein deacetylase from Sulfurisphaera tokodaii (strain DSM 16993 / JCM 10545 / NBRC 100140 / 7) (Sulfolobus tokodaii).